The primary structure comprises 151 residues: Ubiquitin-conjugating enzyme E2 W (151 aa).

Residues 3–151 (SMQKRLQKEL…TKWWYHDDTC (149 aa)) enclose the UBC core domain. The active-site Glycyl thioester intermediate is Cys-91.

The protein belongs to the ubiquitin-conjugating enzyme family.

The protein resides in the nucleus. The catalysed reaction is S-ubiquitinyl-[E1 ubiquitin-activating enzyme]-L-cysteine + [E2 ubiquitin-conjugating enzyme]-L-cysteine = [E1 ubiquitin-activating enzyme]-L-cysteine + S-ubiquitinyl-[E2 ubiquitin-conjugating enzyme]-L-cysteine.. It catalyses the reaction S-ubiquitinyl-[E1 ubiquitin-activating enzyme]-L-cysteine + [acceptor protein]-N-terminal-amino acid = [E1 ubiquitin-activating enzyme]-L-cysteine + N-terminal-ubiquitinyl-[acceptor protein].. It participates in protein modification; protein ubiquitination. Functionally, accepts ubiquitin from the E1 complex and catalyzes its covalent attachment to other proteins. Catalyzes monoubiquitination. Involved in degradation of misfolded chaperone substrate and DNA repair. The polypeptide is Ubiquitin-conjugating enzyme E2 W (ube2w) (Xenopus tropicalis (Western clawed frog)).